The primary structure comprises 402 residues: MYLTREEERILAGEEGEARAKALEVIVKVGEAVGAERLIPIKHAHVSGASYMTIGDAGLRFLARLAESGARFSVPTTVNPVSYDVEEPGAIPMTRLSPRIVKAQSEILKALEAMGADLILTCTPYYTEVPRRVGLREGDSVAWGESSAVAYANSVLGIHTNREGGPLALMAGIAGRTYFYGAHDPEWRKPRVAYRLETPKVLDETEAGVLGEVIATQHRDEHPPLLDAPLGGEAALKEFSAAVGSAGSLAMVHITGVTPGDPGDMIEEVVTMDYGDLARRMEDLAPGFEPDILYVGCPHASIEELRRLYRALSKAGERAGRRTVVSISRSLYLQALREGLVEKLKGLGVRFVRDSCLIVSPFSSGARGVRVATNSYKAYFYLSKKGVEVGLAPIEALPKLVS.

Positions 48, 49, 50, 79, and 80 each coordinate (R)-5-phosphomevalonate. Residue cysteine 122 participates in [4Fe-4S] cluster binding. Residues glutamate 145 and serine 146 each coordinate (R)-5-phosphomevalonate. [4Fe-4S] cluster contacts are provided by cysteine 297 and cysteine 356. A (R)-5-phosphomevalonate-binding site is contributed by lysine 377.

It belongs to the AcnX type II large subunit family. As to quaternary structure, heterodimer composed of a large subunit (PMDh-L) and a small subunit (PMDh-S). [4Fe-4S] cluster is required as a cofactor.

It carries out the reaction (R)-5-phosphomevalonate = (2E)-3-methyl-5-phosphooxypent-2-enoate + H2O. It participates in isoprenoid biosynthesis; isopentenyl diphosphate biosynthesis via mevalonate pathway. Neither the addition of 1 mM Mg(2+) nor 1 mM Mn(2+) has a significant effect on the activity, whereas Zn(2+) causes almost complete inactivation. Strongly inhibited by H(2)O(2), but not by EDTA or iodoacetamide. In terms of biological role, component of a hydro-lyase that catalyzes the dehydration of mevalonate 5-phosphate (MVA5P) to form trans-anhydromevalonate 5-phosphate (tAHMP). Involved in the archaeal mevalonate (MVA) pathway, which provides fundamental precursors for isoprenoid biosynthesis, such as isopentenyl diphosphate (IPP) and dimethylallyl diphosphate (DMAPP). This chain is Phosphomevalonate dehydratase large subunit, found in Aeropyrum pernix (strain ATCC 700893 / DSM 11879 / JCM 9820 / NBRC 100138 / K1).